The primary structure comprises 284 residues: uncharacterized protein (284 aa).

The signal sequence occupies residues 1-24 (MLYSRESRTTVLFLALVTSLTVLC). Over 25–84 (HSVDVTTVFTTSTITEITTVTAAPQPQNKAETALNTATNIIQTMQFLFNCAPFKWKGPLK) the chain is Cytoplasmic. A helical membrane pass occupies residues 85 to 104 (ITSCALNFIVLLLTAWGYLL). At 105-284 (KYLQENKLNS…SVHMYSSSLL (180 aa)) the chain is on the extracellular side. Asn270 carries N-linked (GlcNAc...) asparagine glycosylation.

The protein to yeast YNL033w.

It localises to the cell membrane. This is an uncharacterized protein from Saccharomyces cerevisiae (strain ATCC 204508 / S288c) (Baker's yeast).